A 204-amino-acid polypeptide reads, in one-letter code: Ras-related protein RABG1 (204 aa).

12-19 serves as a coordination point for GTP; that stretch reads GDSGVGKT. The Effector region motif lies at 34–42; that stretch reads HNSTIYVDL. GTP contacts are provided by residues 60–64, 122–125, and 155–156; these read DTAGQ, NKTD, and SA. Residues Cys202 and Cys204 are each lipidated (S-geranylgeranyl cysteine). A Cysteine methyl ester modification is found at Cys204.

It belongs to the small GTPase superfamily. Rab family.

The protein localises to the cell membrane. Functionally, intracellular vesicle trafficking and protein transport. This is Ras-related protein RABG1 (RABG1) from Arabidopsis thaliana (Mouse-ear cress).